The following is a 309-amino-acid chain: Haloalkane dehalogenase (309 aa).

One can recognise an AB hydrolase-1 domain in the interval 37–148; sequence PTVLFLHGNP…FERWEDFHQR (112 aa). Aspartate 110 functions as the Nucleophile in the catalytic mechanism. Glutamate 134 serves as the catalytic Proton donor. The active-site Proton acceptor is the histidine 278.

Belongs to the haloalkane dehalogenase family. Type 2 subfamily. Monomer.

It carries out the reaction 1-haloalkane + H2O = a halide anion + a primary alcohol + H(+). Its function is as follows. Catalyzes hydrolytic cleavage of carbon-halogen bonds in halogenated aliphatic compounds, leading to the formation of the corresponding primary alcohols, halide ions and protons. The polypeptide is Haloalkane dehalogenase (Mesorhizobium japonicum (strain LMG 29417 / CECT 9101 / MAFF 303099) (Mesorhizobium loti (strain MAFF 303099))).